Consider the following 192-residue polypeptide: Fe/S biogenesis protein NfuA (192 aa).

Residues C150 and C153 each contribute to the [4Fe-4S] cluster site.

This sequence belongs to the NfuA family. In terms of assembly, homodimer. The cofactor is [4Fe-4S] cluster.

Involved in iron-sulfur cluster biogenesis. Binds a 4Fe-4S cluster, can transfer this cluster to apoproteins, and thereby intervenes in the maturation of Fe/S proteins. Could also act as a scaffold/chaperone for damaged Fe/S proteins. In Buchnera aphidicola subsp. Acyrthosiphon pisum (strain 5A), this protein is Fe/S biogenesis protein NfuA.